The sequence spans 312 residues: 2,3-dihydroxyphenylpropionate/2,3-dihydroxicinnamic acid 1,2-dioxygenase (312 aa).

Catalysis depends on His115, which acts as the Proton donor. His179 (proton acceptor) is an active-site residue.

Belongs to the LigB/MhpB extradiol dioxygenase family. Homotetramer. Fe(2+) serves as cofactor.

The catalysed reaction is 3-(2,3-dihydroxyphenyl)propanoate + O2 = (2Z,4E)-2-hydroxy-6-oxonona-2,4-dienedioate + H(+). It carries out the reaction (2E)-3-(2,3-dihydroxyphenyl)prop-2-enoate + O2 = (2Z,4E,7E)-2-hydroxy-6-oxonona-2,4,7-trienedioate + H(+). It functions in the pathway aromatic compound metabolism; 3-phenylpropanoate degradation. In terms of biological role, catalyzes the non-heme iron(II)-dependent oxidative cleavage of 2,3-dihydroxyphenylpropionic acid and 2,3-dihydroxicinnamic acid into 2-hydroxy-6-ketononadienedioate and 2-hydroxy-6-ketononatrienedioate, respectively. This Mycolicibacterium paratuberculosis (strain ATCC BAA-968 / K-10) (Mycobacterium paratuberculosis) protein is 2,3-dihydroxyphenylpropionate/2,3-dihydroxicinnamic acid 1,2-dioxygenase.